The sequence spans 174 residues: Streptothricin acetyltransferase (174 aa).

The region spanning 20–170 (FIVREVFDVH…AMYWYWFSGA (151 aa)) is the N-acetyltransferase domain.

The protein belongs to the acetyltransferase family. GNAT subfamily.

The catalysed reaction is streptothricin F + acetyl-CoA = N(beta)-acetylstreptothricin F + CoA + H(+). In terms of biological role, involved in resistance to streptothricin, a broad-spectrum antibiotic produced by streptomycetes. Detoxifies streptothricin via acetylation of the beta amino group of the first beta-lysyl moiety of streptothricin. The chain is Streptothricin acetyltransferase (sat-1) from Escherichia coli.